The sequence spans 257 residues: MSILFYVIFLAYLRGIQSTNMDQRSLPEDSMNSLIIKLIRADILKNKLSKQVMDVKENYQNIVQKVEDHQEMDGDENVKSDFQPVISMDTDLLRQQRRYNSPRVLLSDNTPLEPPPLYLTEDYVGSSVVLNRTSRRKRYAEHKSHRGEYSVCDSESLWVTDKSSAIDIRGHQVTVLGEIKTGNSPVKQYFYETRCKEAKPVKNGCRGIDDKHWNSQCKTSQTYVRALTSENNKLVGWRWIRIDTSCVCALSRKIGRT.

An N-terminal signal peptide occupies residues 1–18 (MSILFYVIFLAYLRGIQS). Positions 19-138 (TNMDQRSLPE…VLNRTSRRKR (120 aa)) are excised as a propeptide. N-linked (GlcNAc...) asparagine glycosylation is present at asparagine 131. 3 disulfide bridges follow: cysteine 152/cysteine 217, cysteine 195/cysteine 246, and cysteine 205/cysteine 248.

It belongs to the NGF-beta family. In terms of tissue distribution, in the embryo, the expression peak at E4.5 and decreases at later stages of development.

The protein resides in the secreted. Its function is as follows. Seems to promote the survival of visceral and proprioceptive sensory neurons. In Gallus gallus (Chicken), this protein is Neurotrophin-3 (NTF3).